Here is a 316-residue protein sequence, read N- to C-terminus: Acetyl-coenzyme A carboxylase carboxyl transferase subunit alpha (316 aa).

The region spanning 39-293 (KLEEKNAQLT…KKHLQANLTN (255 aa)) is the CoA carboxyltransferase C-terminal domain.

The protein belongs to the AccA family. As to quaternary structure, acetyl-CoA carboxylase is a heterohexamer composed of biotin carboxyl carrier protein (AccB), biotin carboxylase (AccC) and two subunits each of ACCase subunit alpha (AccA) and ACCase subunit beta (AccD).

It is found in the cytoplasm. The enzyme catalyses N(6)-carboxybiotinyl-L-lysyl-[protein] + acetyl-CoA = N(6)-biotinyl-L-lysyl-[protein] + malonyl-CoA. The protein operates within lipid metabolism; malonyl-CoA biosynthesis; malonyl-CoA from acetyl-CoA: step 1/1. Component of the acetyl coenzyme A carboxylase (ACC) complex. First, biotin carboxylase catalyzes the carboxylation of biotin on its carrier protein (BCCP) and then the CO(2) group is transferred by the carboxyltransferase to acetyl-CoA to form malonyl-CoA. The polypeptide is Acetyl-coenzyme A carboxylase carboxyl transferase subunit alpha (Coxiella burnetii (strain CbuK_Q154) (Coxiella burnetii (strain Q154))).